Reading from the N-terminus, the 324-residue chain is Cytosolic sulfotransferase 13 (324 aa).

Position 76–81 (76–81 (KSGTTW)) interacts with 3'-phosphoadenylyl sulfate. Catalysis depends on histidine 134, which acts as the Proton acceptor. Residues arginine 156, serine 164, tyrosine 222, and 288 to 290 (RKG) contribute to the 3'-phosphoadenylyl sulfate site.

Belongs to the sulfotransferase 1 family.

The protein localises to the cytoplasm. Functionally, sulfotransferase that utilizes 3'-phospho-5'-adenylyl sulfate (PAPS) as sulfonate donor. This is Cytosolic sulfotransferase 13 (SOT13) from Arabidopsis thaliana (Mouse-ear cress).